We begin with the raw amino-acid sequence, 130 residues long: Fluoride-specific ion channel FluC (130 aa).

The next 4 membrane-spanning stretches (helical) occupy residues 3–23, 39–59, 67–87, and 102–122; these read FVFL…YFVG, GTFS…HLAV, FGIF…SYGL, and VSYA…GWFL. Positions 77 and 80 each coordinate Na(+).

Belongs to the fluoride channel Fluc/FEX (TC 1.A.43) family.

The protein resides in the cell inner membrane. It carries out the reaction fluoride(in) = fluoride(out). With respect to regulation, na(+) is not transported, but it plays an essential structural role and its presence is essential for fluoride channel function. Fluoride-specific ion channel. Important for reducing fluoride concentration in the cell, thus reducing its toxicity. In Helicobacter pylori (strain ATCC 700392 / 26695) (Campylobacter pylori), this protein is Fluoride-specific ion channel FluC.